The following is a 343-amino-acid chain: uncharacterized protein (343 aa).

The next 11 helical transmembrane spans lie at 13–33 (VILY…SMCG), 44–64 (LWGY…ATLD), 71–91 (MHPV…LFFI), 121–141 (ILLL…LTGL), 148–168 (NASL…YLIF), 177–197 (FLGI…GDFS), 203–223 (VAVT…LDTV), 244–264 (VGGF…ELPL), 269–289 (YALG…YIAI), 296–316 (MVGA…FIIL), and 320–340 (FSIM…ILYW). 2 EamA domains span residues 55–192 (IFFG…YLLT) and 216–340 (FFWS…ILYW).

The protein belongs to the EamA transporter family.

It localises to the cell membrane. This is an uncharacterized protein from Methanothermobacter thermautotrophicus (strain ATCC 29096 / DSM 1053 / JCM 10044 / NBRC 100330 / Delta H) (Methanobacterium thermoautotrophicum).